A 212-amino-acid polypeptide reads, in one-letter code: ATP-dependent Clp protease proteolytic subunit (212 aa).

Serine 109 acts as the Nucleophile in catalysis. Histidine 134 is a catalytic residue.

The protein belongs to the peptidase S14 family. As to quaternary structure, fourteen ClpP subunits assemble into 2 heptameric rings which stack back to back to give a disk-like structure with a central cavity, resembling the structure of eukaryotic proteasomes.

Its subcellular location is the cytoplasm. The enzyme catalyses Hydrolysis of proteins to small peptides in the presence of ATP and magnesium. alpha-casein is the usual test substrate. In the absence of ATP, only oligopeptides shorter than five residues are hydrolyzed (such as succinyl-Leu-Tyr-|-NHMec, and Leu-Tyr-Leu-|-Tyr-Trp, in which cleavage of the -Tyr-|-Leu- and -Tyr-|-Trp bonds also occurs).. Cleaves peptides in various proteins in a process that requires ATP hydrolysis. Has a chymotrypsin-like activity. Plays a major role in the degradation of misfolded proteins. In Bdellovibrio bacteriovorus (strain ATCC 15356 / DSM 50701 / NCIMB 9529 / HD100), this protein is ATP-dependent Clp protease proteolytic subunit.